A 947-amino-acid polypeptide reads, in one-letter code: Regulator of spindle assembly protein 2 (947 aa).

Disordered regions lie at residues 20–148 (EKPA…LSEQ) and 173–211 (SPHEARQQTIQESSEQLEPRAKVTRSSSQPPPIDTLKPR). Composition is skewed to basic and acidic residues over residues 30 to 50 (PKYRDHHEKIRNKENMEEGEK) and 62 to 84 (TREDYERYDEDRRLKDKARDLRI). Composition is skewed to polar residues over residues 90-102 (SATPEASPSSDQY) and 179-188 (QQTIQESSEQ). Residues 276–320 (IIAEEAKKRRNEAEAVRKLIEVETQNAKKRAVIQELKDRIDKLTQ) are a coiled coil. Disordered regions lie at residues 407-453 (KINP…RRIG), 575-594 (ERESMEAQESESESMELEIP), 600-662 (SVTT…GLII), and 681-705 (EQSLEEELEPRGNNDSADDSGFLLD). A compositionally biased stretch (low complexity) spans 411-422 (SSQLNQQSSSDA). Residues 430 to 449 (EASTQMTSRLAESAMTQTSP) are compositionally biased toward polar residues. Residues 563-591 (AGLSHYLEQVKKERESMEAQESESESMEL) are a coiled coil. Residues 580 to 590 (EAQESESESME) are compositionally biased toward acidic residues. Over residues 645-657 (FEHEIEEHKEPEK) the composition is skewed to basic and acidic residues.

Interacts with phosphatase regulatory subunit rsa-1 and tpxl-1. May interact with spd-5. May interact with sys-1.

The protein resides in the cytoplasm. The protein localises to the cytoskeleton. It is found in the microtubule organizing center. Its subcellular location is the centrosome. Recruits rsa-1 and, thereby, phosphatase let-92/paa-1 complex to the centrosomes. Recruits sys-1/beta-catenin to mitotic centrosomes during the first embryonic cell divisions. The polypeptide is Regulator of spindle assembly protein 2 (Caenorhabditis elegans).